Consider the following 137-residue polypeptide: F420H(2)-dependent biliverdin reductase (137 aa).

Coenzyme F420-(gamma-Glu)n contacts are provided by residues 36 to 41 (HVVAVG), 54 to 55 (IT), 60 to 61 (QK), R67, and 78 to 81 (GARW).

Belongs to the F420H(2)-dependent biliverdin reductase family. Homodimer.

It is found in the cell surface. Its subcellular location is the secreted. It carries out the reaction (4Z,15Z)-bilirubin IXalpha + oxidized coenzyme F420-(gamma-L-Glu)(n) + H(+) = biliverdin IXalpha + reduced coenzyme F420-(gamma-L-Glu)(n). Functionally, catalyzes the F420H(2)-dependent reduction of biliverdin-IXalpha at C10 position, leading to bilirubin-IXalpha, a potent antioxidant. As biliverdin-IXalpha is produced in high amounts in macrophages infected with M.tuberculosis, its reduction by Rv2074 may play a role in protecting mycobacteria against oxidative stress, aiding the persistence of M.tuberculosis infection. This Mycobacterium tuberculosis (strain CDC 1551 / Oshkosh) protein is F420H(2)-dependent biliverdin reductase.